We begin with the raw amino-acid sequence, 319 residues long: L-lactate dehydrogenase 2 (319 aa).

Residues V17, D38, K43, Y69, and 83–84 contribute to the NAD(+) site; that span reads GA. Substrate-binding residues include Q86 and R92. NAD(+) contacts are provided by residues S105, 122-124, and S147; that span reads ATN. 124-127 lines the substrate pocket; that stretch reads NPVD. 152-155 is a substrate binding site; the sequence is DSGR. Beta-D-fructose 1,6-bisphosphate is bound by residues R157 and H172. H179 functions as the Proton acceptor in the catalytic mechanism. A Phosphotyrosine modification is found at Y224. T233 serves as a coordination point for substrate.

The protein belongs to the LDH/MDH superfamily. LDH family. In terms of assembly, homotetramer.

It localises to the cytoplasm. The catalysed reaction is (S)-lactate + NAD(+) = pyruvate + NADH + H(+). The protein operates within fermentation; pyruvate fermentation to lactate; (S)-lactate from pyruvate: step 1/1. Its activity is regulated as follows. Allosterically activated by fructose 1,6-bisphosphate (FBP). Its function is as follows. Catalyzes the conversion of lactate to pyruvate. In Peribacillus psychrosaccharolyticus (Bacillus psychrosaccharolyticus), this protein is L-lactate dehydrogenase 2.